The following is a 1670-amino-acid chain: Protein TASOR (1670 aa).

Positions 1–110 are disordered; sequence MATAVETEAC…QIPRKSREKK (110 aa). Position 2 is an N-acetylalanine (alanine 2). The span at 67–78 shows a compositional bias: polar residues; the sequence is QSLSHEQPQDSS. A Phosphoserine modification is found at serine 344. Residue lysine 586 forms a Glycyl lysine isopeptide (Lys-Gly) (interchain with G-Cter in SUMO2) linkage. 4 positions are modified to phosphoserine: serine 633, serine 636, serine 673, and serine 800. Residues lysine 823 and lysine 832 each participate in a glycyl lysine isopeptide (Lys-Gly) (interchain with G-Cter in SUMO2) cross-link. Serine 843 carries the phosphoserine modification. Lysine 872 is covalently cross-linked (Glycyl lysine isopeptide (Lys-Gly) (interchain with G-Cter in SUMO2)). The segment at 921–947 is disordered; that stretch reads TGGNARSPEDQLGKHGEKQTPGMKSPE. Phosphoserine occurs at positions 927, 971, and 979. Basic and acidic residues predominate over residues 927–938; the sequence is SPEDQLGKHGEK. A phosphothreonine mark is found at threonine 982 and threonine 1049. Residue serine 1103 is modified to Phosphoserine. Over residues 1532 to 1545 the composition is skewed to basic and acidic residues; sequence ETKGSRGTDQKKNT. Disordered stretches follow at residues 1532-1558 and 1638-1670; these read ETKGSRGTDQKKNTQIELQSSPDVQNS and FLSAYTESLDRDKSPPPLSWGKSDSSRPYSQEK. Composition is skewed to polar residues over residues 1546 to 1558 and 1659 to 1670; these read QIELQSSPDVQNS and KSDSSRPYSQEK. The residue at position 1552 (serine 1552) is a Phosphoserine.

It belongs to the TASOR family. As to quaternary structure, component of the HUSH complex; at least composed of TASOR, PPHLN1 and MPHOSPH8. Interacts with MORC2; the interaction associateS MORC2 with the HUSH complex which recruits MORC2 to heterochromatic loci. Interacts with ZNF638; leading to recruitment of the HUSH complex to unintegrated retroviral DNA. Interacts with INPP5A, EML1, SV1L, GPSM2, ITGB3BP, CNTN1, ETFA, PSMD8, S100A10, MPHOSPH8, TMEM100, ALB, PARPBP, HCFC2, NCBP1 and SETDB1.

It localises to the nucleus. Its subcellular location is the chromosome. Functionally, component of the HUSH complex, a multiprotein complex that mediates epigenetic repression. The HUSH complex is recruited to genomic loci rich in H3K9me3 and is required to maintain transcriptional silencing by promoting recruitment of SETDB1, a histone methyltransferase that mediates further deposition of H3K9me3, as well as MORC2. Also represses L1 retrotransposons in collaboration with MORC2 and, probably, SETDB1, the silencing is dependent of repressive epigenetic modifications, such as H3K9me3 mark. Silencing events often occur within introns of transcriptionally active genes, and lead to the down-regulation of host gene expression. The HUSH complex is also involved in the silencing of unintegrated retroviral DNA by being recruited by ZNF638: some part of the retroviral DNA formed immediately after infection remains unintegrated in the host genome and is transcriptionally repressed. Plays a crucial role in early embryonic development. Involved in the organization of spindle poles and spindle apparatus assembly during zygotic division. Plays an important role in maintaining epiblast fitness or potency. The protein is Protein TASOR of Homo sapiens (Human).